A 253-amino-acid polypeptide reads, in one-letter code: Triosephosphate isomerase (253 aa).

12–14 is a binding site for substrate; sequence NWK. Residue histidine 100 is the Electrophile of the active site. The active-site Proton acceptor is the glutamate 170. Residues glycine 176, serine 215, and 236–237 contribute to the substrate site; that span reads GG.

The protein belongs to the triosephosphate isomerase family. Homodimer.

The protein localises to the cytoplasm. It catalyses the reaction D-glyceraldehyde 3-phosphate = dihydroxyacetone phosphate. It participates in carbohydrate biosynthesis; gluconeogenesis. It functions in the pathway carbohydrate degradation; glycolysis; D-glyceraldehyde 3-phosphate from glycerone phosphate: step 1/1. In terms of biological role, involved in the gluconeogenesis. Catalyzes stereospecifically the conversion of dihydroxyacetone phosphate (DHAP) to D-glyceraldehyde-3-phosphate (G3P). The polypeptide is Triosephosphate isomerase (Rhodopseudomonas palustris (strain BisA53)).